Consider the following 880-residue polypeptide: Leucine--tRNA ligase (880 aa).

Positions 46–56 match the 'HIGH' region motif; it reads PYPSGALHMGH. Positions 638–642 match the 'KMSKS' region motif; the sequence is KMSKS. Residue lysine 641 coordinates ATP.

The protein belongs to the class-I aminoacyl-tRNA synthetase family.

It localises to the cytoplasm. It catalyses the reaction tRNA(Leu) + L-leucine + ATP = L-leucyl-tRNA(Leu) + AMP + diphosphate. The sequence is that of Leucine--tRNA ligase from Xanthomonas axonopodis pv. citri (strain 306).